We begin with the raw amino-acid sequence, 370 residues long: Putative L-lysine 2,3-aminomutase aq_454 (370 aa).

In terms of domain architecture, Radical SAM core spans 107-322 (HRYPDRVLLN…RGRLSGFGIP (216 aa)). The [4Fe-4S] cluster site is built by C121, C125, and C128. K334 bears the N6-(pyridoxal phosphate)lysine mark.

Belongs to the radical SAM superfamily. KamA family. [4Fe-4S] cluster is required as a cofactor. Requires pyridoxal 5'-phosphate as cofactor.

The protein is Putative L-lysine 2,3-aminomutase aq_454 of Aquifex aeolicus (strain VF5).